Consider the following 228-residue polypeptide: Urease accessory protein UreF (228 aa).

It belongs to the UreF family. UreD, UreF and UreG form a complex that acts as a GTP-hydrolysis-dependent molecular chaperone, activating the urease apoprotein by helping to assemble the nickel containing metallocenter of UreC. The UreE protein probably delivers the nickel.

Its subcellular location is the cytoplasm. In terms of biological role, required for maturation of urease via the functional incorporation of the urease nickel metallocenter. In Blochmanniella pennsylvanica (strain BPEN), this protein is Urease accessory protein UreF.